The following is a 45-amino-acid chain: Mu-conotoxin-like Cal 12.1.2e (45 aa).

Cystine bridges form between Cys3/Cys16, Cys11/Cys28, Cys18/Cys33, and Cys27/Cys39. Trp17 bears the 6'-bromotryptophan mark. Pro23 is modified (4-hydroxyproline). Trp38 is modified (6'-bromotryptophan). At Pro40 the chain carries 4-hydroxyproline.

In terms of tissue distribution, expressed by the venom duct.

It localises to the secreted. Its function is as follows. Mu-conotoxins block voltage-gated sodium channels. This toxin reversibly blocks voltage-gated sodium channel in cephalopods, with no alteration in the voltage dependence of sodium conductance or on the kinetics of inactivation. The chain is Mu-conotoxin-like Cal 12.1.2e from Californiconus californicus (California cone).